Reading from the N-terminus, the 343-residue chain is MTIAATEALTRCIEHREIFHDEMLHLMRLLMRGELSPQIASALLMGLRVKKETVGEITAAAQVMREFATPVVTPNPQDLLDMCGTGGDGSHTFNISTTAMFVAAAAGVPIAKHGNRSASSSSGSADVLEALGANLQLTPEEVAECVAATGIGFMFAPAHHGAMKNVAAVRKELGVRTIFNILGPLTNPAGAANQLMGVFHPDLVGIQVRVLERLGSRHVLVVHGKDGMDEASLGAATMVGELKDGVVREYEIHPEDYGLSMMSNRGIKVSNREESRALVIEALDNVDGVARDIVALNAGLAIYAGNKADSIPEALALAFETISNGSARAKLEEFCAYTRKFQK.

5-phospho-alpha-D-ribose 1-diphosphate-binding positions include Gly84, 87–88 (GD), Thr92, 94–97 (NIST), 112–120 (KHGNRSASS), and Ser124. Gly84 provides a ligand contact to anthranilate. Ser96 is a binding site for Mg(2+). Asn115 contacts anthranilate. Arg170 is a binding site for anthranilate. The Mg(2+) site is built by Asp229 and Glu230.

This sequence belongs to the anthranilate phosphoribosyltransferase family. As to quaternary structure, homodimer. Requires Mg(2+) as cofactor.

It catalyses the reaction N-(5-phospho-beta-D-ribosyl)anthranilate + diphosphate = 5-phospho-alpha-D-ribose 1-diphosphate + anthranilate. The protein operates within amino-acid biosynthesis; L-tryptophan biosynthesis; L-tryptophan from chorismate: step 2/5. In terms of biological role, catalyzes the transfer of the phosphoribosyl group of 5-phosphorylribose-1-pyrophosphate (PRPP) to anthranilate to yield N-(5'-phosphoribosyl)-anthranilate (PRA). The chain is Anthranilate phosphoribosyltransferase from Bordetella pertussis (strain Tohama I / ATCC BAA-589 / NCTC 13251).